The following is a 988-amino-acid chain: Transposase for transposon Tn501 (988 aa).

The protein belongs to the transposase 7 family.

Required for transposition of transposon Tn501. This chain is Transposase for transposon Tn501 (tnpA), found in Pseudomonas aeruginosa.